A 490-amino-acid chain; its full sequence is Ketol-acid reductoisomerase (NADP(+)) (490 aa).

A KARI N-terminal Rossmann domain is found at 15 to 208 (INLQKCKLID…GSHHAGILHS (194 aa)). NADP(+) is bound by residues 45–48 (CGSQ), R68, S78, and 108–110 (DKQ). H132 is an active-site residue. Position 158 (G158) interacts with NADP(+). KARI C-terminal knotted domains lie at 209-344 (SFIA…KCNI) and 345-484 (YYKQ…MTSM). D217, E221, E389, and E393 together coordinate Mg(2+). S414 provides a ligand contact to substrate.

It belongs to the ketol-acid reductoisomerase family. It depends on Mg(2+) as a cofactor.

The catalysed reaction is (2R)-2,3-dihydroxy-3-methylbutanoate + NADP(+) = (2S)-2-acetolactate + NADPH + H(+). The enzyme catalyses (2R,3R)-2,3-dihydroxy-3-methylpentanoate + NADP(+) = (S)-2-ethyl-2-hydroxy-3-oxobutanoate + NADPH + H(+). Its pathway is amino-acid biosynthesis; L-isoleucine biosynthesis; L-isoleucine from 2-oxobutanoate: step 2/4. It participates in amino-acid biosynthesis; L-valine biosynthesis; L-valine from pyruvate: step 2/4. Functionally, involved in the biosynthesis of branched-chain amino acids (BCAA). Catalyzes an alkyl-migration followed by a ketol-acid reduction of (S)-2-acetolactate (S2AL) to yield (R)-2,3-dihydroxy-isovalerate. In the isomerase reaction, S2AL is rearranged via a Mg-dependent methyl migration to produce 3-hydroxy-3-methyl-2-ketobutyrate (HMKB). In the reductase reaction, this 2-ketoacid undergoes a metal-dependent reduction by NADPH to yield (R)-2,3-dihydroxy-isovalerate. This chain is Ketol-acid reductoisomerase (NADP(+)), found in Buchnera aphidicola subsp. Melaphis rhois.